A 678-amino-acid chain; its full sequence is Protein CASP (678 aa).

Residues 1-619 (MAANVGSMFQ…LVLSNKMART (619 aa)) lie on the Cytoplasmic side of the membrane. 2 coiled-coil regions span residues 67–450 (LLKS…QDLS) and 502–556 (LSII…FLQS). Ser586 is subject to Phosphoserine. A helical; Anchor for type IV membrane protein membrane pass occupies residues 620–640 (IGFFYTLFLHCLVFLVLYKLA). Topologically, residues 641–678 (WSESMERDCATFCAKKFADHLHKFHENDNGAAAGDLWQ) are lumenal.

This sequence belongs to the CASP family. As to quaternary structure, homodimer; disulfide-linked. Interacts with GOLGA5.

It localises to the golgi apparatus membrane. In terms of biological role, may be involved in intra-Golgi retrograde transport. This is Protein CASP (CUTL1) from Pongo abelii (Sumatran orangutan).